We begin with the raw amino-acid sequence, 555 residues long: MIWVAVVITMLLFILVAKPTGIYLEKTFQGSKKLDKVFGPFEKLIFKITGVKEYNQTWKQYALSLVLLNGFMIVVVYFIFRLQGVLPLNPAHIEGMEPTLAFNTAISFMADTNLQHYSGENGLSYLSQLIGITFLMFAAPATTLALVMAFIRGLAGKELGNFFVDFTRALTRVFLPITFMAALVFVALGVPQTLDGAVTAQTIDGAKQSILRGPVASFVSIKELGNNGGGFFGANSTHPFENPGQMSNILQMMLMMLLPTALPFTYGRMVGNKKQGRILFVSLFMVFLLGFITITTSELNGNPALNGMGIEHVQGSTEGKEVRFGTVFSSLYATVTTAAETGAVNTMHDTLTPIGGLVPLVNMMLNTVYGGVGAGFVNIIMYAIIAVFISGLMVGRTPEFLGKKIEGKEMKLIAVTILFHPLLILGFSALALSTSLGTDAISHSGFHGLTQVVYEYTSSAANNGSGFEGLADNTPFWNITTGLVMFLGRYFSLITMLAVAASLKEKTVVPETVGTFRTDNSLFGGIFIGTIVIVGALTFFPMLVLGPIAEFLTLK.

Helical transmembrane passes span 2-22 (IWVA…PTGI), 60-80 (QYAL…YFIF), 130-150 (IGIT…VMAF), 173-193 (VFLP…VPQT), 246-266 (MSNI…PFTY), 278-298 (ILFV…TTSE), 374-394 (AGFV…GLMV), 412-432 (LIAV…ALAL), 483-503 (LVMF…AASL), and 525-545 (GIFI…MLVL).

This sequence belongs to the KdpA family. The system is composed of three essential subunits: KdpA, KdpB and KdpC.

It localises to the cell membrane. In terms of biological role, part of the high-affinity ATP-driven potassium transport (or Kdp) system, which catalyzes the hydrolysis of ATP coupled with the electrogenic transport of potassium into the cytoplasm. This subunit binds the extracellular potassium ions and delivers the ions to the membrane domain of KdpB through an intramembrane tunnel. The chain is Potassium-transporting ATPase potassium-binding subunit from Bacillus cereus (strain AH187).